Here is a 302-residue protein sequence, read N- to C-terminus: Cobalt-precorrin-6A reductase (302 aa).

The segment covering 1-10 (MQTPEIKEGT) has biased composition (basic and acidic residues). A disordered region spans residues 1–37 (MQTPEIKEGTEQYLWRRKTMNPGDKGVKRKGSDRQRE).

It belongs to the precorrin-6x reductase family.

It carries out the reaction Co-precorrin-6B + NAD(+) = Co-precorrin-6A + NADH + H(+). It participates in cofactor biosynthesis; adenosylcobalamin biosynthesis; cob(II)yrinate a,c-diamide from sirohydrochlorin (anaerobic route): step 7/10. Its function is as follows. Catalyzes the reduction of the macrocycle of cobalt-precorrin-6A to cobalt-precorrin-6B. The sequence is that of Cobalt-precorrin-6A reductase (cbiJ) from Methanothermobacter thermautotrophicus (strain ATCC 29096 / DSM 1053 / JCM 10044 / NBRC 100330 / Delta H) (Methanobacterium thermoautotrophicum).